We begin with the raw amino-acid sequence, 289 residues long: Early E1A protein (289 aa).

The interval 41–49 is interaction with RB1 in competition with E2F1; sequence PTLHELYDL. The tract at residues 76 to 140 is interaction with UBE2I; sequence EGIDLLTFPP…PSDDEDEEGE (65 aa). The disordered stretch occupies residues 82–107; the sequence is TFPPAPGSPEPPHLSRQPEQPEQRAL. The span at 84–93 shows a compositional bias: pro residues; sequence PPAPGSPEPP. Phosphoserine; by host is present on serine 89. Positions 113–117 match the PXLXP motif, interaction with host ZMYND11 motif; it reads PNLVP. An LXCXE motif, interaction with host RB1 and TMEM173/STING motif is present at residues 122 to 126; sequence LTCHE. A zinc finger lies at 154–174; it reads CRSCHYHRRNTGDPDIMCSLC. Residues 187–245 form a disordered region; the sequence is VSEPEPEPEPEPEPARPTRRPKLVPAILRRPTSPVSRECNSSTDSCDSGPSNTPPEIHP. Residues serine 219 and serine 231 each carry the phosphoserine; by host modification. Polar residues predominate over residues 219 to 237; the sequence is SPVSRECNSSTDSCDSGPS. Residues 258 to 289 carry the Bipartite nuclear localization signal motif; sequence RVGGRRQAVECIEDLLNESGQPLDLSCKRPRP. The PXDLS motif, CTBP-binding motif lies at 279–283; sequence PLDLS.

This sequence belongs to the adenoviridae E1A protein family. As to quaternary structure, interacts with host UBE2I; this interaction interferes with polySUMOylation. Interacts with host RB1; this interaction induces the aberrant dissociation of RB1-E2F1 complex thereby disrupting the activity of RB1 and activating E2F1-regulated genes. Interacts with host ATF7; the interaction enhances ATF7-mediated viral transactivation activity which requires the zinc binding domains of both proteins. Isoform early E1A 32 kDa protein and isoform early E1A 26 kDa protein interact (via N-terminus) with CUL1 and E3 ubiquitin ligase RBX1; these interactions inhibit RBX1-CUL1-dependent elongation reaction of ubiquitin chains and attenuate ubiquitination of SCF(FBXW7) target proteins. Interacts (via PXLXP motif) with host ZMYND11/BS69 (via MYND-type zinc finger); this interaction inhibits E1A mediated transactivation. Interacts with host EP300; this interaction stimulates the acetylation of RB1 by recruiting EP300 and RB1 into a multimeric-protein complex. Interacts with host CTBP1 and CTBP2; this interaction seems to potentiate viral replication. Interacts with host DCAF7. Interacts with host DYRK1A. Interacts with host KPNA4; this interaction allows E1A import into the host nucleus. Interacts with host EP400; this interaction stabilizes MYC. Interacts (via LXCXE motif) with host TMEM173/STING; this interaction impairs the ability of TMEM173/STING to sense cytosolic DNA and promote the production of type I interferon (IFN-alpha and IFN-beta). Interacts (via C-terminus) with host ZBED1/hDREF (via C-terminus); the interaction is direct.

It localises to the host nucleus. Its function is as follows. Plays a role in viral genome replication by driving entry of quiescent cells into the cell cycle. Stimulation of progression from G1 to S phase allows the virus to efficiently use the cellular DNA replicating machinery to achieve viral genome replication. E1A protein has both transforming and trans-activating activities. Induces the disassembly of the E2F1 transcription factor from RB1 by direct competition for the same binding site on RB1, with subsequent transcriptional activation of E2F1-regulated S-phase genes and of the E2 region of the adenoviral genome. Release of E2F1 leads to the ARF-mediated inhibition of MDM2 and causes TP53/p53 to accumulate because it is not targeted for degradation by MDM2-mediated ubiquitination anymore. This increase in TP53, in turn, would arrest the cell proliferation and direct its death but this effect is counteracted by the viral protein E1B-55K. Inactivation of the ability of RB1 to arrest the cell cycle is critical for cellular transformation, uncontrolled cellular growth and proliferation induced by viral infection. Interaction with RBX1 and CUL1 inhibits ubiquitination of the proteins targeted by SCF(FBXW7) ubiquitin ligase complex, and may be linked to unregulated host cell proliferation. The tumorigenesis-restraining activity of E1A may be related to the disruption of the host CtBP-CtIP complex through the CtBP binding motif. Interacts with host TBP protein; this interaction probably disrupts the TBP-TATA complex. Interaction with host TMEM173/STING impairs the ability of TMEM173/STING to sense cytosolic DNA and promote the production of type I interferon (IFN-alpha and IFN-beta). Promotes the sumoylation of host ZBED1/hDREF with SUMO1. The protein is Early E1A protein of Homo sapiens (Human).